The sequence spans 429 residues: Uterine milk protein (429 aa).

A signal peptide spans 1-25 (MSHRRMQLALSLVFILCGLFNSIFC). Residues N222 and N268 are each glycosylated (N-linked (GlcNAc...) asparagine).

The protein belongs to the serpin family. UTMP subfamily. In terms of processing, glycosylated; carries the so-called mannose 6-phosphate lysosomal recognition marker on its carbohydrate chains. As to expression, secreted by ovine endometrium under the influence of progesterone.

This chain is Uterine milk protein, found in Ovis aries (Sheep).